The sequence spans 406 residues: MSGAPTAGAALMLCAATAVLLSAQGGPVQSKSPRFASWDEMNVLAHGLLQLGQGLREHAERTRSQLSALERRLSACGSACQGTEGSTDLPLAPESRVDPEVLHSLQTQLKAQNSRIQQLFHKVAQQQRHLEKQHLRIQHLQSQFGLLDHKHLDHEVAKPARRKRLPEMAQPVDPAHNVSRLHRLPRDCQELFQVGERQSGLFEIQPQGSPPFLVNCKMTSDGGWTVIQRRHDGSVDFNRPWEAYKAGFGDPHGEFWLGLEKVHSITGDRNSRLAVQLRDWDGNAELLQFSVHLGGEDTAYSLQLTAPVAGQLGATTVPPSGLSVPFSTWDQDHDLRRDKNCAKSLSGGWWFGTCSHSNLNGQYFRSIPQQRQKLKKGIFWKTWRGRYYPLQATTMLIQPMAAEAAS.

An N-terminal signal peptide occupies residues 1–25 (MSGAPTAGAALMLCAATAVLLSAQG). A coiled-coil region spans residues 100–143 (EVLHSLQTQLKAQNSRIQQLFHKVAQQQRHLEKQHLRIQHLQSQ). Asn177 carries N-linked (GlcNAc...) asparagine glycosylation. Residues 179–401 (SRLHRLPRDC…ATTMLIQPMA (223 aa)) enclose the Fibrinogen C-terminal domain. 2 disulfides stabilise this stretch: Cys188–Cys216 and Cys341–Cys354.

As to quaternary structure, homooligomer; disulfide-linked via Cys residues in the N-terminal part of the protein. The homooligomer undergoes proteolytic processing to release the ANGPTL4 C-terminal chain, which circulates as a monomer. The homooligomer unprocessed form is able to interact with the extracellular matrix. In terms of processing, N-glycosylated. Post-translationally, forms disulfide-linked dimers and tetramers. Cleaved into a smaller N-terminal chain and a larger chain that contains the fibrinogen C-terminal domain; both cleaved and uncleaved forms are detected in the extracellular space. The cleaved form is not present within the cell. As to expression, detected in blood plasma (at protein level). Detected in liver. Detected in white fat tissue and placenta. Expressed at high levels in the placenta, heart, liver, muscle, pancreas and lung but expressed poorly in the brain and kidney.

The protein localises to the secreted. Its subcellular location is the extracellular space. The protein resides in the extracellular matrix. Its function is as follows. Mediates inactivation of the lipoprotein lipase LPL, and thereby plays a role in the regulation of triglyceride clearance from the blood serum and in lipid metabolism. May also play a role in regulating glucose homeostasis and insulin sensitivity. Inhibits proliferation, migration, and tubule formation of endothelial cells and reduces vascular leakage. Upon heterologous expression, inhibits the adhesion of endothelial cell to the extracellular matrix (ECM), and inhibits the reorganization of the actin cytoskeleton, formation of actin stress fibers and focal adhesions in endothelial cells that have adhered to ANGPTL4-containing ECM (in vitro). Depending on context, may modulate tumor-related angiogenesis. Mediates inactivation of the lipoprotein lipase LPL, and thereby plays an important role in the regulation of triglyceride clearance from the blood serum and in lipid metabolism. Has higher activity in LPL inactivation than the uncleaved protein. The polypeptide is Angiopoietin-related protein 4 (ANGPTL4) (Homo sapiens (Human)).